The primary structure comprises 229 residues: Enolase-phosphatase E1 (229 aa).

It belongs to the HAD-like hydrolase superfamily. MasA/MtnC family. In terms of assembly, monomer. Mg(2+) is required as a cofactor.

It carries out the reaction 5-methylsulfanyl-2,3-dioxopentyl phosphate + H2O = 1,2-dihydroxy-5-(methylsulfanyl)pent-1-en-3-one + phosphate. The protein operates within amino-acid biosynthesis; L-methionine biosynthesis via salvage pathway; L-methionine from S-methyl-5-thio-alpha-D-ribose 1-phosphate: step 3/6. It participates in amino-acid biosynthesis; L-methionine biosynthesis via salvage pathway; L-methionine from S-methyl-5-thio-alpha-D-ribose 1-phosphate: step 4/6. Bifunctional enzyme that catalyzes the enolization of 2,3-diketo-5-methylthiopentyl-1-phosphate (DK-MTP-1-P) into the intermediate 2-hydroxy-3-keto-5-methylthiopentenyl-1-phosphate (HK-MTPenyl-1-P), which is then dephosphorylated to form the acireductone 1,2-dihydroxy-3-keto-5-methylthiopentene (DHK-MTPene). This Yersinia enterocolitica serotype O:8 / biotype 1B (strain NCTC 13174 / 8081) protein is Enolase-phosphatase E1.